Here is a 78-residue protein sequence, read N- to C-terminus: Acyl carrier protein (78 aa).

A Carrier domain is found at 2 to 77 (SNLEERVKKI…AAIDYVTANA (76 aa)). At Ser37 the chain carries O-(pantetheine 4'-phosphoryl)serine.

Belongs to the acyl carrier protein (ACP) family. Post-translationally, 4'-phosphopantetheine is transferred from CoA to a specific serine of apo-ACP by AcpS. This modification is essential for activity because fatty acids are bound in thioester linkage to the sulfhydryl of the prosthetic group.

Its subcellular location is the cytoplasm. It functions in the pathway lipid metabolism; fatty acid biosynthesis. In terms of biological role, carrier of the growing fatty acid chain in fatty acid biosynthesis. The protein is Acyl carrier protein of Vibrio vulnificus (strain CMCP6).